The following is a 619-amino-acid chain: ATP-dependent RNA helicase abstrakt (619 aa).

Residues 1–11 are compositionally biased toward basic residues; it reads MAHVKRYRRSS. Disordered stretches follow at residues 1–25 and 50–69; these read MAHVKRYRRSSKSSEEGDLDNEDYV and ETAQPKSSSENENEDDSQGA. Phosphoserine is present on residues serine 11, serine 13, serine 14, serine 56, serine 57, serine 58, and serine 66. A Q motif motif is present at residues 177 to 205; it reads RSFREMKFPKGILNGLAAKGIKNPTPIQV. One can recognise a Helicase ATP-binding domain in the interval 208 to 392; it reads LPTVLAGRDL…RSALVKPVTI (185 aa). 221–228 provides a ligand contact to ATP; it reads AFTGSGKT. The DEAD box signature appears at 340–343; it reads DEAD. The Helicase C-terminal domain maps to 403 to 563; it reads NVTQQVEYVK…EVPDFLDELA (161 aa). The segment at 577-594 adopts a CCHC-type zinc-finger fold; sequence HGCTYCGGLGHRITECPK.

It belongs to the DEAD box helicase family. DDX41 subfamily.

Its subcellular location is the nucleus. The catalysed reaction is ATP + H2O = ADP + phosphate + H(+). Functionally, ATP-dependent RNA helicase. Is essential for the directed and fasciculated early outgrowth of the bolwig nerves, as well as for its navigation at later stages. Is required during post-transcriptional gene expression. Plays a role during morphogenetic process, apoptosis and the establishment of cell polarity. This Drosophila melanogaster (Fruit fly) protein is ATP-dependent RNA helicase abstrakt (abs).